The following is a 479-amino-acid chain: Muscarinic acetylcholine receptor M4 (479 aa).

Topologically, residues 1–31 (MANFTPVNGSSGNQSVRLVTSSSHNRYETVE) are extracellular. 2 N-linked (GlcNAc...) asparagine glycosylation sites follow: Asn-8 and Asn-13. Residues 32–54 (MVFIATVTGSLSLVTVVGNILVM) form a helical membrane-spanning segment. Residues 55–68 (LSIKVNRQLQTVNN) are Cytoplasmic-facing. The helical transmembrane segment at 69–89 (YFLFSLACADLIIGAFSMNLY) threads the bilayer. Over 90–106 (TVYIIKGYWPLGAVVCD) the chain is Extracellular. Cys-105 and Cys-185 are oxidised to a cystine. The chain crosses the membrane as a helical span at residues 107–128 (LWLALDYVVSNASVMNLLIISF). Residues 129–148 (DRYFCVTKPLTYPARRTTKM) are Cytoplasmic-facing. The chain crosses the membrane as a helical span at residues 149–171 (AGLMIAAAWVLSFVLWAPAILFW). The Extracellular segment spans residues 172–193 (QFVVGKRTVPDNQCFIQFLSNP). A helical membrane pass occupies residues 194–216 (AVTFGTAIAAFYLPVVIMTVLYI). The Cytoplasmic portion of the chain corresponds to 217 to 401 (HISLASRSRV…AARERKVTRT (185 aa)). Residues 271–333 (KLEEAPPPAL…PAPPLQPRAL (63 aa)) form a disordered region. Over residues 275 to 286 (APPPALPPPPRP) the composition is skewed to pro residues. Over residues 294 to 304 (NESSSGSATQN) the composition is skewed to polar residues. The chain crosses the membrane as a helical span at residues 402–422 (IFAILLAFILTWTPYNVMVLV). The Extracellular segment spans residues 423-436 (NTFCQSCIPDTVWS). The chain crosses the membrane as a helical span at residues 437 to 456 (IGYWLCYVNSTINPACYALC). Topologically, residues 457-479 (NATFKKTFRHLLLCQYRNIGTAR) are cytoplasmic. Thr-459, Thr-463, and Thr-477 each carry phosphothreonine.

Belongs to the G-protein coupled receptor 1 family. Muscarinic acetylcholine receptor subfamily. CHRM4 sub-subfamily.

It is found in the cell membrane. The protein resides in the postsynaptic cell membrane. Its function is as follows. The muscarinic acetylcholine receptor mediates various cellular responses, including inhibition of adenylate cyclase, breakdown of phosphoinositides and modulation of potassium channels through the action of G proteins. Primary transducing effect is inhibition of adenylate cyclase. The protein is Muscarinic acetylcholine receptor M4 (CHRM4) of Homo sapiens (Human).